The chain runs to 127 residues: Aspartate 1-decarboxylase (127 aa).

S25 (schiff-base intermediate with substrate; via pyruvic acid) is an active-site residue. Residue S25 is modified to Pyruvic acid (Ser). A substrate-binding site is contributed by T57. Y58 serves as the catalytic Proton donor. Residue 73 to 75 coordinates substrate; the sequence is GAA.

Belongs to the PanD family. As to quaternary structure, heterooctamer of four alpha and four beta subunits. Requires pyruvate as cofactor. Post-translationally, is synthesized initially as an inactive proenzyme, which is activated by self-cleavage at a specific serine bond to produce a beta-subunit with a hydroxyl group at its C-terminus and an alpha-subunit with a pyruvoyl group at its N-terminus.

The protein localises to the cytoplasm. It carries out the reaction L-aspartate + H(+) = beta-alanine + CO2. It participates in cofactor biosynthesis; (R)-pantothenate biosynthesis; beta-alanine from L-aspartate: step 1/1. Catalyzes the pyruvoyl-dependent decarboxylation of aspartate to produce beta-alanine. This chain is Aspartate 1-decarboxylase, found in Shouchella clausii (strain KSM-K16) (Alkalihalobacillus clausii).